Here is a 334-residue protein sequence, read N- to C-terminus: Thioredoxin reductase (334 aa).

Residues 11 to 14 (SGAG), 40 to 41 (TA), Gln45, Asn54, Cys148, Asp294, and 301 to 303 (RQA) each bind FAD. A disulfide bridge connects residues Cys145 and Cys148.

Belongs to the class-II pyridine nucleotide-disulfide oxidoreductase family. In terms of assembly, homodimer. The cofactor is FAD.

The enzyme catalyses [thioredoxin]-dithiol + NADP(+) = [thioredoxin]-disulfide + NADPH + H(+). In terms of biological role, component of the thioredoxin-thioredoxin reductase system which may be involved in biosynthesis of penicillins and cephalosporins and may be important in determining the thiol-disulfide redox balance. In Penicillium chrysogenum (Penicillium notatum), this protein is Thioredoxin reductase (TRR1).